The sequence spans 113 residues: T cell receptor alpha variable 12-2 (113 aa).

Positions 1–20 (MKSLRVLLVILWLQLSWVWS) are cleaved as a signal peptide. One can recognise an Ig-like domain in the interval 23–113 (KEVEQNSGPL…DSATYLCAVN (91 aa)). Residue Asn43 is glycosylated (N-linked (GlcNAc...) asparagine). Cysteines 44 and 110 form a disulfide.

As to quaternary structure, alpha-beta TR is a heterodimer composed of an alpha and beta chain; disulfide-linked. The alpha-beta TR is associated with the transmembrane signaling CD3 coreceptor proteins to form the TR-CD3 (TcR or TCR). The assembly of alpha-beta TR heterodimers with CD3 occurs in the endoplasmic reticulum where a single alpha-beta TR heterodimer associates with one CD3D-CD3E heterodimer, one CD3G-CD3E heterodimer and one CD247 homodimer forming a stable octameric structure. CD3D-CD3E and CD3G-CD3E heterodimers preferentially associate with TR alpha and TR beta chains, respectively. The association of the CD247 homodimer is the last step of TcR assembly in the endoplasmic reticulum and is required for transport to the cell surface.

It localises to the cell membrane. Functionally, v region of the variable domain of T cell receptor (TR) alpha chain that participates in the antigen recognition. Alpha-beta T cell receptors are antigen specific receptors which are essential to the immune response and are present on the cell surface of T lymphocytes. Recognize peptide-major histocompatibility (MH) (pMH) complexes that are displayed by antigen presenting cells (APC), a prerequisite for efficient T cell adaptive immunity against pathogens. Binding of alpha-beta TR to pMH complex initiates TR-CD3 clustering on the cell surface and intracellular activation of LCK that phosphorylates the ITAM motifs of CD3G, CD3D, CD3E and CD247 enabling the recruitment of ZAP70. In turn ZAP70 phosphorylates LAT, which recruits numerous signaling molecules to form the LAT signalosome. The LAT signalosome propagates signal branching to three major signaling pathways, the calcium, the mitogen-activated protein kinase (MAPK) kinase and the nuclear factor NF-kappa-B (NF-kB) pathways, leading to the mobilization of transcription factors that are critical for gene expression and essential for T cell growth and differentiation. The T cell repertoire is generated in the thymus, by V-(D)-J rearrangement. This repertoire is then shaped by intrathymic selection events to generate a peripheral T cell pool of self-MH restricted, non-autoaggressive T cells. Post-thymic interaction of alpha-beta TR with the pMH complexes shapes TR structural and functional avidity. The polypeptide is T cell receptor alpha variable 12-2 (Homo sapiens (Human)).